The following is an 823-amino-acid chain: Protein Jade-3 (823 aa).

Residues 1-32 (MKRHRPVSSSDSSDESPSTSFTSGSMYRIKSK) form a disordered region. Low complexity predominate over residues 8–25 (SSSDSSDESPSTSFTSGS). 2 positions are modified to N6-acetyllysine: Lys30 and Lys32. Ser85 is modified (phosphoserine). The PHD-type 1 zinc-finger motif lies at 200–250 (DVICDVCRSPDSEEGNDMVFCDKCNVCVHQACYGILKVPEGSWLCRSCVLG). A C2HC pre-PHD-type zinc finger spans residues 252-286 (YPQCVLCPKKGGALKTTKTGTKWAHVSCALWIPEV). The PHD-type 2 zinc finger occupies 310–366 (LVCNLCKLKTGACIQCSIKSCITAFHVTCAFEHGLEMKTILDEGDEVKFKSYCLKHS). Disordered stretches follow at residues 372–395 (LGEAEYPHHRAKEQSQAKSEKTSL) and 542–576 (KLKMPKSTPEDHRNSSTETDQQPHSPDSSSSVHSI). Residues 561-575 (DQQPHSPDSSSSVHS) show a composition bias toward low complexity. Position 566 is a phosphoserine (Ser566). At Lys601 the chain carries N6-acetyllysine. Residue Ser608 is modified to Phosphoserine. The segment at 609–630 (LSHSRSEAKESSPAWRTPSSEC) is disordered. Residue Lys638 is modified to N6-acetyllysine. Composition is skewed to polar residues over residues 650–664 (SSIGNGKSQPNSKFA) and 673–684 (WSGNVTQKDSSS). A disordered region spans residues 650–684 (SSIGNGKSQPNSKFAKSNGLEGSWSGNVTQKDSSS). At Lys735 the chain carries N6-acetyllysine. Residues 758 to 823 (RAPYQENDGY…HPLSHSSMQR (66 aa)) are disordered. 3 positions are modified to phosphoserine: Ser774, Ser776, and Ser780. A compositionally biased stretch (basic and acidic residues) spans 781-809 (DGNKEKVRVRKDSSDRENPPHDSRRDCHG).

Belongs to the JADE family. In terms of assembly, component of the HBO1 complex composed at least of ING4 or ING5, KAT7/HBO1, MEAF6, and one of JADE1, JADE2 and JADE3. In terms of tissue distribution, ubiquitously expressed, with highest levels in placenta and uterus.

Functionally, scaffold subunit of some HBO1 complexes, which have a histone H4 acetyltransferase activity. The sequence is that of Protein Jade-3 (JADE3) from Homo sapiens (Human).